Consider the following 462-residue polypeptide: 3beta-hydroxysteroid dehydrogenase/Delta(5)-Delta(4) isomerase 1 (462 aa).

NAD(+)-binding positions include 51-56 (GGAGHL), Y220, and K224. K224 acts as the Proton donor in catalysis. 2 consecutive transmembrane segments (helical) span residues 321-341 (VGTFSFWTPLNIALGFSSSMI) and 428-448 (VAVLVLGTILIFVAVFSFTFW).

It belongs to the 3-beta-HSD family. As to expression, expressed exclusively in the neuron-like XXX(L/R) cells through all four larval stages and becomes fainter in adults.

The protein localises to the membrane. The catalysed reaction is a 3beta-hydroxy-Delta(5)-steroid + NAD(+) = a 3-oxo-Delta(5)-steroid + NADH + H(+). It catalyses the reaction cholesterol + NAD(+) = cholest-5-en-3-one + NADH + H(+). The enzyme catalyses a 3-oxo-Delta(5)-steroid = a 3-oxo-Delta(4)-steroid. It carries out the reaction cholest-5-en-3-one = cholest-4-en-3-one. The protein operates within steroid hormone biosynthesis; dafachronic acid biosynthesis. In terms of biological role, hydroxysteroid dehydrogenase involved in the biosynthesis of dafrachonic acids. Catalyzes the dehydrogenation of cholesterol or its derivatives and the isomerization of the double carbon bond on the sterol ring. Modifies sterols into a Delta(4)-3-keto-sterols such as cholest-4-en-3-one, precursor of Delta(4)-dafachronic acid. Contributes to the production of Delta(7)-dafachronic acid in the XXX cells. Dafachronic acids act as ligands and bind directly to the nuclear hormone receptor (NHR) daf-12 suppressing dauer formation and inducing reproductive growth. Acts in parallel to AKT-1 to promote reproductive development via DAF-16/FoxO and DAF-12. This Caenorhabditis elegans protein is 3beta-hydroxysteroid dehydrogenase/Delta(5)-Delta(4) isomerase 1.